A 924-amino-acid polypeptide reads, in one-letter code: Periplasmic nitrate reductase (924 aa).

Residues 1 to 29 (MNRRDFIKNTAIASACGVAGLSVPSSVLA) constitute a signal peptide (tat-type signal). In terms of domain architecture, 4Fe-4S Mo/W bis-MGD-type spans 35–91 (WRWDKAVCRFCGTGCGILVARQDGKIVAVKGDPAAPVNRGLNCIKGYFNAKIMYGED). Cysteine 42, cysteine 45, cysteine 49, and cysteine 77 together coordinate [4Fe-4S] cluster. Mo-bis(molybdopterin guanine dinucleotide) contacts are provided by residues lysine 79, glutamine 147, asparagine 172, cysteine 176, 209-216 (WGANMAEM), methionine 417, glutamine 421, asparagine 527, 552-553 (SD), lysine 575, aspartate 602, and 814-823 (TGRVLEHWHS). Tryptophan 890 provides a ligand contact to substrate. Positions 898 and 915 each coordinate Mo-bis(molybdopterin guanine dinucleotide).

It belongs to the prokaryotic molybdopterin-containing oxidoreductase family. NasA/NapA/NarB subfamily. In terms of assembly, component of the periplasmic nitrate reductase NapAB complex composed of NapA and NapB. [4Fe-4S] cluster serves as cofactor. The cofactor is Mo-bis(molybdopterin guanine dinucleotide). In terms of processing, predicted to be exported by the Tat system. The position of the signal peptide cleavage has not been experimentally proven.

Its subcellular location is the periplasm. It catalyses the reaction 2 Fe(II)-[cytochrome] + nitrate + 2 H(+) = 2 Fe(III)-[cytochrome] + nitrite + H2O. Its function is as follows. Catalytic subunit of the periplasmic nitrate reductase complex NapAB. Receives electrons from NapB and catalyzes the reduction of nitrate to nitrite. The sequence is that of Periplasmic nitrate reductase from Campylobacter lari (strain RM2100 / D67 / ATCC BAA-1060).